A 390-amino-acid polypeptide reads, in one-letter code: Ribosomal RNA small subunit methyltransferase H (390 aa).

S-adenosyl-L-methionine is bound by residues 47–49 (GGH), Asp-66, Phe-93, Asp-122, and Gln-129. The disordered stretch occupies residues 282-390 (SKTPPGLPID…SHREDVEGEQ (109 aa)). Residues 305 to 316 (GSEKADEQENNK) show a composition bias toward basic and acidic residues. A compositionally biased stretch (polar residues) spans 348 to 358 (SGSSTTYSARS). 2 stretches are compositionally biased toward basic and acidic residues: residues 360 to 372 (SRHE…REHL) and 381 to 390 (SHREDVEGEQ).

This sequence belongs to the methyltransferase superfamily. RsmH family.

Its subcellular location is the cytoplasm. The catalysed reaction is cytidine(1402) in 16S rRNA + S-adenosyl-L-methionine = N(4)-methylcytidine(1402) in 16S rRNA + S-adenosyl-L-homocysteine + H(+). Specifically methylates the N4 position of cytidine in position 1402 (C1402) of 16S rRNA. This chain is Ribosomal RNA small subunit methyltransferase H, found in Corynebacterium kroppenstedtii (strain DSM 44385 / JCM 11950 / CIP 105744 / CCUG 35717).